The following is a 244-amino-acid chain: Leucyl/phenylalanyl-tRNA--protein transferase (244 aa).

A disordered region spans residues 1 to 22 (MHSQPYLLSPAPNNTPFPPAEH).

Belongs to the L/F-transferase family.

The protein localises to the cytoplasm. It carries out the reaction N-terminal L-lysyl-[protein] + L-leucyl-tRNA(Leu) = N-terminal L-leucyl-L-lysyl-[protein] + tRNA(Leu) + H(+). The catalysed reaction is N-terminal L-arginyl-[protein] + L-leucyl-tRNA(Leu) = N-terminal L-leucyl-L-arginyl-[protein] + tRNA(Leu) + H(+). The enzyme catalyses L-phenylalanyl-tRNA(Phe) + an N-terminal L-alpha-aminoacyl-[protein] = an N-terminal L-phenylalanyl-L-alpha-aminoacyl-[protein] + tRNA(Phe). Functions in the N-end rule pathway of protein degradation where it conjugates Leu, Phe and, less efficiently, Met from aminoacyl-tRNAs to the N-termini of proteins containing an N-terminal arginine or lysine. This chain is Leucyl/phenylalanyl-tRNA--protein transferase, found in Xylella fastidiosa (strain M12).